Here is a 465-residue protein sequence, read N- to C-terminus: GTPase Der (465 aa).

2 EngA-type G domains span residues 27–190 (PVLA…PEAP) and 202–375 (RRIA…AGWE). GTP contacts are provided by residues 33-40 (GRPNVGKS), 80-84 (DTGGW), 142-145 (NKVD), 208-215 (GRPNVGKS), 255-259 (DTAGI), and 320-323 (NKWD). Positions 376–458 (TRVPTGRLNA…PIHISVRVRE (83 aa)) constitute a KH-like domain.

Belongs to the TRAFAC class TrmE-Era-EngA-EngB-Septin-like GTPase superfamily. EngA (Der) GTPase family. Associates with the 50S ribosomal subunit.

Its function is as follows. GTPase that plays an essential role in the late steps of ribosome biogenesis. In Streptomyces coelicolor (strain ATCC BAA-471 / A3(2) / M145), this protein is GTPase Der.